The chain runs to 134 residues: 16 kDa beta-galactoside-binding lectin (134 aa).

Position 1 is an N-acetylmethionine (Met1). Residues 4–134 enclose the Galectin domain; it reads GLVVTQLDVQ…DFKVKAIKFS (131 aa). Residue 69 to 75 coordinates a beta-D-galactoside; the sequence is WGEEDRK.

As to quaternary structure, homodimer. Mainly in the liver (adult), mainly in the muscle (embryo).

Its function is as follows. This protein binds beta-galactoside. Its physiological function is not yet known. It may be involved in the regulation of differentiation. The sequence is that of 16 kDa beta-galactoside-binding lectin from Gallus gallus (Chicken).